The primary structure comprises 205 residues: MSLNYIKNFYEGCVKPPTVIGQFHTLFFGSVRMFFLGVLGFAVYGNEALHFSCDPDKREINLFCYNQFRPITPQVFWALQLVIVLLPGAIFHLYAACKSINQDCILQKPVYTVIYVLSVLLRISLEVFAFWLQIHLFGFQVKPIYLCDTESLGKKPNILKCMVPEHFEKTIFLIAMYTFTVITMVLCVAEVFEIIFRRSCFLFKR.

At 1–22 (MSLNYIKNFYEGCVKPPTVIGQ) the chain is on the cytoplasmic side. The helical transmembrane segment at 23 to 43 (FHTLFFGSVRMFFLGVLGFAV) threads the bilayer. At 44–74 (YGNEALHFSCDPDKREINLFCYNQFRPITPQ) the chain is on the extracellular side. Cystine bridges form between Cys-53/Cys-161 and Cys-64/Cys-147. Residues 75-95 (VFWALQLVIVLLPGAIFHLYA) traverse the membrane as a helical segment. Residues 96-111 (ACKSINQDCILQKPVY) are Cytoplasmic-facing. Residues 112-132 (TVIYVLSVLLRISLEVFAFWL) form a helical membrane-spanning segment. Over 133 to 170 (QIHLFGFQVKPIYLCDTESLGKKPNILKCMVPEHFEKT) the chain is Extracellular. Residues 171-191 (IFLIAMYTFTVITMVLCVAEV) traverse the membrane as a helical segment. Topologically, residues 192 to 205 (FEIIFRRSCFLFKR) are cytoplasmic.

Belongs to the connexin family. Beta-type (group I) subfamily. A connexon is composed of a hexamer of connexins. As to expression, highly expressed in lens, where it is mainly found in lens fibers and to a lesser extent in lens epithelium. Weakly expressed in retina. Not detected in other tissues tested.

It localises to the cell membrane. Functionally, mediates calcium-independent ATP release, suggesting activity as a hemichannel. Does not form functional gap junctions. May play a non-essential role in eye lens development. This chain is Gap junction epsilon-1 protein, found in Mus musculus (Mouse).